A 301-amino-acid polypeptide reads, in one-letter code: Ubiquitin thioesterase OTU1 (301 aa).

A UBX-like region spans residues 4–80 (KVTGAGINQV…TIESSDSNES (77 aa)). Residues 109 to 229 (LSVHPVLDDN…GIHYDSLTMN (121 aa)) enclose the OTU domain. Positions 114 to 120 (VLDDNSC) are cys-loop. Residue D117 is part of the active site. The active-site Nucleophile is the C120. K160 participates in a covalent cross-link: Glycyl lysine isopeptide (Lys-Gly) (interchain with G-Cter in ubiquitin). Residues 169–179 (ILKMESWGGAI) are variable-loop. The his-loop stretch occupies residues 218–222 (FNGIH). A substrate-binding site is contributed by I221. Residue H222 is part of the active site. Residues 243–248 (DDVLTA) are S2 site. Residues 270-294 (IKCNTCQMTFVGEREVARHAESTGH) form a C2H2-type zinc finger. H294 is an active-site residue.

In terms of assembly, forms a complex composed of CDC48, NPL4, UFD1, DOA1, SHP1 and deubiquitinase OTU1; within the complex interacts with CDC48 and DOA1/UFD3.

The protein resides in the cytoplasm. It is found in the nucleus. The enzyme catalyses Thiol-dependent hydrolysis of ester, thioester, amide, peptide and isopeptide bonds formed by the C-terminal Gly of ubiquitin (a 76-residue protein attached to proteins as an intracellular targeting signal).. In terms of biological role, hydrolase that can remove conjugated ubiquitin from proteins and may therefore play an important regulatory role at the level of protein turnover by preventing degradation. Participates in the regulation of the ubiquitin conjugation pathway involving CDC48 by hindering multiubiquitination of substrates at the CDC48 chaperone. May be indirectly involved in PIS1 gene expression. This chain is Ubiquitin thioesterase OTU1 (OTU1), found in Saccharomyces cerevisiae (strain ATCC 204508 / S288c) (Baker's yeast).